A 299-amino-acid polypeptide reads, in one-letter code: Probable transport accessory protein MmpS3 (299 aa).

The segment at 1 to 72 is disordered; the sequence is MSGPNPPGRE…EHVTGGPYVP (72 aa). Residues 101 to 121 form a helical membrane-spanning segment; that stretch reads VVGVAAIIAAVALVVSVSLLV. Residues 128-139 are compositionally biased toward polar residues; sequence KLATGDTTSSAP. The segment at 128–213 is disordered; that stretch reads KLATGDTTSS…TTTTPTGPRQ (86 aa). The span at 150 to 163 shows a compositional bias: pro residues; that stretch reads PAPPPPPPAPPPTT. A compositionally biased stretch (low complexity) spans 164–176; it reads EIPTATETQTVTV. Positions 177–193 are enriched in pro residues; sequence TPPPPPPPATTTAPPPA.

This sequence belongs to the MmpS family.

The protein resides in the cell membrane. In Mycobacterium tuberculosis (strain CDC 1551 / Oshkosh), this protein is Probable transport accessory protein MmpS3 (mmpS3).